A 266-amino-acid chain; its full sequence is Tryptophan synthase alpha chain (266 aa).

Active-site proton acceptor residues include E47 and D58.

Belongs to the TrpA family. In terms of assembly, tetramer of two alpha and two beta chains.

It is found in the plastid. The protein resides in the chloroplast. It catalyses the reaction (1S,2R)-1-C-(indol-3-yl)glycerol 3-phosphate + L-serine = D-glyceraldehyde 3-phosphate + L-tryptophan + H2O. It functions in the pathway amino-acid biosynthesis; L-tryptophan biosynthesis; L-tryptophan from chorismate: step 5/5. Its function is as follows. The alpha subunit is responsible for the aldol cleavage of indoleglycerol phosphate to indole and glyceraldehyde 3-phosphate. This Cyanidium caldarium (Red alga) protein is Tryptophan synthase alpha chain.